The following is a 437-amino-acid chain: 3-deoxy-D-manno-octulosonic acid transferase (437 aa).

Residues 16–36 traverse the membrane as a helical; Signal-anchor segment; that stretch reads VVLVCAFVIALPKLLYKMLVY. The Proton acceptor role is filled by Glu70. CMP is bound by residues 279-280, 319-321, and 346-349; these read PR, IGL, and NLLE.

Belongs to the glycosyltransferase group 1 family. Glycosyltransferase 30 subfamily.

Its subcellular location is the cell inner membrane. It catalyses the reaction lipid IVA (E. coli) + CMP-3-deoxy-beta-D-manno-octulosonate = alpha-Kdo-(2-&gt;6)-lipid IVA (E. coli) + CMP + H(+). The catalysed reaction is alpha-Kdo-(2-&gt;6)-lipid IVA (E. coli) + CMP-3-deoxy-beta-D-manno-octulosonate = alpha-Kdo-(2-&gt;4)-alpha-Kdo-(2-&gt;6)-lipid IVA (E. coli) + CMP + H(+). It carries out the reaction alpha-Kdo-(2-&gt;4)-alpha-Kdo-(2-&gt;6)-lipid IVA (E. coli) + CMP-3-deoxy-beta-D-manno-octulosonate = alpha-Kdo-(2-&gt;8)-alpha-Kdo-(2-&gt;4)-alpha-Kdo-(2-&gt;6)-lipid IVA (E. coli) + CMP + H(+). It functions in the pathway bacterial outer membrane biogenesis; LPS core biosynthesis. Its function is as follows. Involved in lipopolysaccharide (LPS) biosynthesis. Catalyzes the transfer of three 3-deoxy-D-manno-octulosonate (Kdo) residues from CMP-Kdo to lipid IV(A), the tetraacyldisaccharide-1,4'-bisphosphate precursor of lipid A. Thus generates the genus-specific LPS epitope of Chlamydia, composed of the trisaccharide alpha-Kdo-(2-&gt;8)-alpha-Kdo-(2-&gt;4)-alpha-Kdo. This chain is 3-deoxy-D-manno-octulosonic acid transferase (waaA), found in Chlamydia pneumoniae (Chlamydophila pneumoniae).